An 878-amino-acid chain; its full sequence is Phosphoenolpyruvate carboxylase (878 aa).

Catalysis depends on residues His138 and Lys544.

The protein belongs to the PEPCase type 1 family. Mg(2+) is required as a cofactor.

The enzyme catalyses oxaloacetate + phosphate = phosphoenolpyruvate + hydrogencarbonate. Its function is as follows. Forms oxaloacetate, a four-carbon dicarboxylic acid source for the tricarboxylic acid cycle. This chain is Phosphoenolpyruvate carboxylase, found in Psychromonas ingrahamii (strain DSM 17664 / CCUG 51855 / 37).